We begin with the raw amino-acid sequence, 369 residues long: 3-dehydroquinate synthase (369 aa).

NAD(+) is bound by residues 72-77 (SGEKEK), 130-131 (TT), K142, and K151. Zn(2+)-binding residues include E184, H247, and H264.

This sequence belongs to the sugar phosphate cyclases superfamily. Dehydroquinate synthase family. Co(2+) is required as a cofactor. It depends on Zn(2+) as a cofactor. NAD(+) serves as cofactor.

The protein localises to the cytoplasm. It catalyses the reaction 7-phospho-2-dehydro-3-deoxy-D-arabino-heptonate = 3-dehydroquinate + phosphate. It functions in the pathway metabolic intermediate biosynthesis; chorismate biosynthesis; chorismate from D-erythrose 4-phosphate and phosphoenolpyruvate: step 2/7. In terms of biological role, catalyzes the conversion of 3-deoxy-D-arabino-heptulosonate 7-phosphate (DAHP) to dehydroquinate (DHQ). This chain is 3-dehydroquinate synthase, found in Bacillus cytotoxicus (strain DSM 22905 / CIP 110041 / 391-98 / NVH 391-98).